The primary structure comprises 754 residues: RNA exonuclease 5 (754 aa).

Positions M1–P36 are disordered. One can recognise an Exonuclease domain in the interval L222–V370. RRM domains follow at residues S488–T562 and G583–Q662.

The polypeptide is RNA exonuclease 5 (Rexo5) (Rattus norvegicus (Rat)).